A 391-amino-acid chain; its full sequence is Pyridinium-3,5-bisthiocarboxylic acid mononucleotide nickel insertion protein (391 aa).

Belongs to the LarC family.

It catalyses the reaction Ni(II)-pyridinium-3,5-bisthiocarboxylate mononucleotide = pyridinium-3,5-bisthiocarboxylate mononucleotide + Ni(2+). Involved in the biosynthesis of a nickel-pincer cofactor ((SCS)Ni(II) pincer complex). Binds Ni(2+), and functions in nickel delivery to pyridinium-3,5-bisthiocarboxylic acid mononucleotide (P2TMN), to form the mature cofactor. Is thus probably required for the activation of nickel-pincer cofactor-dependent enzymes. The protein is Pyridinium-3,5-bisthiocarboxylic acid mononucleotide nickel insertion protein of Staphylococcus saprophyticus subsp. saprophyticus (strain ATCC 15305 / DSM 20229 / NCIMB 8711 / NCTC 7292 / S-41).